The primary structure comprises 475 residues: Ribulose bisphosphate carboxylase large chain (475 aa).

Residues 1 to 2 (MS) constitute a propeptide that is removed on maturation. Proline 3 is subject to N-acetylproline. The residue at position 14 (lysine 14) is an N6,N6,N6-trimethyllysine. 2 residues coordinate substrate: asparagine 123 and threonine 173. Lysine 175 acts as the Proton acceptor in catalysis. Position 177 (lysine 177) interacts with substrate. Mg(2+) contacts are provided by lysine 201, aspartate 203, and glutamate 204. Lysine 201 bears the N6-carboxylysine mark. The active-site Proton acceptor is histidine 294. Substrate-binding residues include arginine 295, histidine 327, and serine 379.

This sequence belongs to the RuBisCO large chain family. Type I subfamily. As to quaternary structure, heterohexadecamer of 8 large chains and 8 small chains; disulfide-linked. The disulfide link is formed within the large subunit homodimers. Mg(2+) serves as cofactor. The disulfide bond which can form in the large chain dimeric partners within the hexadecamer appears to be associated with oxidative stress and protein turnover.

Its subcellular location is the plastid. The protein localises to the chloroplast. The catalysed reaction is 2 (2R)-3-phosphoglycerate + 2 H(+) = D-ribulose 1,5-bisphosphate + CO2 + H2O. The enzyme catalyses D-ribulose 1,5-bisphosphate + O2 = 2-phosphoglycolate + (2R)-3-phosphoglycerate + 2 H(+). RuBisCO catalyzes two reactions: the carboxylation of D-ribulose 1,5-bisphosphate, the primary event in carbon dioxide fixation, as well as the oxidative fragmentation of the pentose substrate in the photorespiration process. Both reactions occur simultaneously and in competition at the same active site. The chain is Ribulose bisphosphate carboxylase large chain from Chara vulgaris (Common stonewort).